The sequence spans 1388 residues: MASSVTACQGASPYQPRNYQLEMLEASMKENIIVAMDTGSGKTHIAVLRIKAELDICPPDKLVWFLAPTVALCIQQHEVIASNLPAVRTRTLTGLDKVELWTEQSIWDAVLNGYRVIVSTHAVLADALSHGFVKMSRLALLIFDEAHHCTRRHAANKIMRDFYHPTLTKSGPGAVPRIMGLTASPVVRSNHQELLTVESNLDAVCRTPRVHRQELVKFTHRPHLQQIWYTPTDPAGFKSASQTLGALYHAWETLDIGDDPYIQRLRKSPLDDTALKKALLTGKTYCREQLRRFVDRSRHIFEELGEWAAEYYIYASIKQLGDRVRNSYMSGDWDEAEKAYLVDFLSKIPASEIQLALNDPGSFRISPKFESLLNFLDSLDEREFSGLIFVKQRATVSAMTSLLSVHPCTRERFRCAAYVGWSNGSASKDILGDLLNMQLQRDTLDDFRSGRKNLIIATDVLEEGIDISACSVVVCYDKPPNLKSFVQRRGRARRKQSTFAIMFPTDDASADVSKWQDLEQAMIEAYQDDERQLQSVSALESLDEEVMERLTVESTSAVLTADMAMAHLHHFCAVLPPQPYADMRPVFSFETNEDGLLKGTVILPSCVHPKVRRTEGRRWWRTERAAMKETAFQAYKALYEFGLVNDHLLPLTKRPELKSHDLGAMPSILETSEQYDPWIEWAYSWSSPDIHQSRIVVRMNEGRGDELCMRLMGPTYLPPLSPMTLFWNNSTTFTVTFEAAERVPLVPLSSVEDMRAITALYLKATNSRVCSSERDFTALFAPDLHHTELKGWLNAYEGCDPAMEVYSRGHNPLLMGVVRDHSRYGEPFLFRKWLVSDQNPSCSVVELECAPFPHRRNLLHRQRLANSQVDVDEETPESAAKNPIVAADACTIDRLPFTMAIFGLFISAIVERLETELIATRLRETILRDVGFKSTDHIITAISTPFAHALTNYQRYEFLGDSILKFSVSCQLFFQHPNWHEGYLSEGRAMIVQNPRLAKAALDTGLDAYIVTKRIASRKWSAPLISEKLERVPAKRQMSTKVLADVVEALIGAAYMDGGHATAQACIRRLLPEINLHAVDTRTATRSVAPESARHMMNERLKDHIGYTFEDESLLVEALTHPSCDYDSTTQSYQRLEYLGDAVLDMVIVSAIFNHPIQRPQGDMTKIKHAVVNANLLAFLCMESATSEEKLDVAQTSKDSFAVTTSQESVELWRFMRYRGQNLNAARDASLARHRALRDEIASSLLHAPHYPWHALSRLNADKFFSDIVESVLGAIFVDSGGDLAPCEVFVERIGLMAYLRRILDQEIDVRHPRSVAQQLAKTNIQFVLQRVPNEEGGASYQCSVRIEQAELFVVTGCLTAEEAEVTAAVEAIKFLTRDEGSTPLNTS.

In terms of domain architecture, Helicase ATP-binding spans methionine 23 to alanine 203. Residue methionine 36–threonine 43 coordinates ATP. The DEAH box signature appears at aspartate 144 to histidine 147. The Helicase C-terminal domain occupies serine 371–serine 537. The Dicer dsRNA-binding fold domain occupies alanine 564–lysine 658. RNase III domains lie at alanine 919–glycine 1059 and asparagine 1098–glycine 1281. Mg(2+) is bound by residues glutamate 1137, aspartate 1267, and glutamate 1270.

It belongs to the helicase family. Dicer subfamily. It depends on Mg(2+) as a cofactor. The cofactor is Mn(2+).

Its function is as follows. Dicer-like endonuclease involved in cleaving double-stranded RNA in the RNA interference (RNAi) pathway. Produces 21 to 25 bp dsRNAs (siRNAs) which target the selective destruction of homologous RNAs leading to sequence-specific suppression of gene expression, called post-transcriptional gene silencing (PTGS). Part of a broad host defense response against viral infection and transposons. This is Dicer-like protein 2 (dcl2) from Neosartorya fischeri (strain ATCC 1020 / DSM 3700 / CBS 544.65 / FGSC A1164 / JCM 1740 / NRRL 181 / WB 181) (Aspergillus fischerianus).